Here is a 532-residue protein sequence, read N- to C-terminus: Chaperonin GroEL 2 (532 aa).

Residues threonine 30–proline 33, lysine 51, aspartate 87–threonine 91, glycine 415, asparagine 479–alanine 481, and aspartate 495 each bind ATP.

It belongs to the chaperonin (HSP60) family. In terms of assembly, forms a cylinder of 14 subunits composed of two heptameric rings stacked back-to-back. Interacts with the co-chaperonin GroES.

It localises to the cytoplasm. It carries out the reaction ATP + H2O + a folded polypeptide = ADP + phosphate + an unfolded polypeptide.. In terms of biological role, together with its co-chaperonin GroES, plays an essential role in assisting protein folding. The GroEL-GroES system forms a nano-cage that allows encapsulation of the non-native substrate proteins and provides a physical environment optimized to promote and accelerate protein folding. This chain is Chaperonin GroEL 2, found in Vibrio parahaemolyticus serotype O3:K6 (strain RIMD 2210633).